We begin with the raw amino-acid sequence, 308 residues long: uncharacterized protein (308 aa).

The next 5 membrane-spanning stretches (helical) occupy residues 46 to 66 (GISA…GVLQ), 82 to 102 (LLAA…LLWM), 159 to 179 (AAIG…FLIF), 190 to 210 (FFQV…IGVL), and 271 to 291 (LYLF…SLYF).

Belongs to the oxidase-dependent Fe transporter (OFeT) (TC 9.A.10.1) family.

The protein localises to the cell membrane. This is an uncharacterized protein from Synechocystis sp. (strain ATCC 27184 / PCC 6803 / Kazusa).